Consider the following 97-residue polypeptide: Meromycolate extension acyl carrier protein (97 aa).

Positions 3–81 (ASQQEIIAGL…DVVAYIQKLE (79 aa)) constitute a Carrier domain. The residue at position 41 (S41) is an O-(pantetheine 4'-phosphoryl)serine.

It belongs to the acyl carrier protein (ACP) family. In terms of processing, 4'-phosphopantetheine is transferred from CoA to a specific serine of apo-AcpM.

Its subcellular location is the cytoplasm. In terms of biological role, acyl carrier protein involved in meromycolate extension. This is Meromycolate extension acyl carrier protein (acpM) from Mycolicibacterium aurum (Mycobacterium aurum).